Consider the following 79-residue polypeptide: Acyl carrier protein (79 aa).

A Carrier domain is found at 2–77 (SDIEARVRKI…HAIDYIKSNA (76 aa)). S37 is subject to O-(pantetheine 4'-phosphoryl)serine.

This sequence belongs to the acyl carrier protein (ACP) family. Post-translationally, 4'-phosphopantetheine is transferred from CoA to a specific serine of apo-ACP by AcpS. This modification is essential for activity because fatty acids are bound in thioester linkage to the sulfhydryl of the prosthetic group.

The protein resides in the cytoplasm. It functions in the pathway lipid metabolism; fatty acid biosynthesis. Carrier of the growing fatty acid chain in fatty acid biosynthesis. This Xylella fastidiosa (strain M23) protein is Acyl carrier protein.